Reading from the N-terminus, the 408-residue chain is Dual-specificity RNA methyltransferase RlmN (408 aa).

E93 serves as the catalytic Proton acceptor. The 281-residue stretch at 99–379 (ETNRGTLCIS…TTTRKTRGDD (281 aa)) folds into the Radical SAM core domain. A disulfide bridge connects residues C106 and C384. Residues C113, C117, and C120 each contribute to the [4Fe-4S] cluster site. The tract at residues 152-196 (SPAGSKDGDGGPDHASRATKLDHRAADAKGVQSDSWRSSDPEEDH) is disordered. Over residues 157 to 178 (KDGDGGPDHASRATKLDHRAAD) the composition is skewed to basic and acidic residues. S-adenosyl-L-methionine-binding positions include 210–211 (GE), S242, 264–266 (SLH), and N341. The active-site S-methylcysteine intermediate is the C384.

This sequence belongs to the radical SAM superfamily. RlmN family. It depends on [4Fe-4S] cluster as a cofactor.

It localises to the cytoplasm. The enzyme catalyses adenosine(2503) in 23S rRNA + 2 reduced [2Fe-2S]-[ferredoxin] + 2 S-adenosyl-L-methionine = 2-methyladenosine(2503) in 23S rRNA + 5'-deoxyadenosine + L-methionine + 2 oxidized [2Fe-2S]-[ferredoxin] + S-adenosyl-L-homocysteine. It carries out the reaction adenosine(37) in tRNA + 2 reduced [2Fe-2S]-[ferredoxin] + 2 S-adenosyl-L-methionine = 2-methyladenosine(37) in tRNA + 5'-deoxyadenosine + L-methionine + 2 oxidized [2Fe-2S]-[ferredoxin] + S-adenosyl-L-homocysteine. Functionally, specifically methylates position 2 of adenine 2503 in 23S rRNA and position 2 of adenine 37 in tRNAs. m2A2503 modification seems to play a crucial role in the proofreading step occurring at the peptidyl transferase center and thus would serve to optimize ribosomal fidelity. The sequence is that of Dual-specificity RNA methyltransferase RlmN from Aromatoleum aromaticum (strain DSM 19018 / LMG 30748 / EbN1) (Azoarcus sp. (strain EbN1)).